Consider the following 194-residue polypeptide: Imidazoleglycerol-phosphate dehydratase (194 aa).

The protein belongs to the imidazoleglycerol-phosphate dehydratase family.

Its subcellular location is the cytoplasm. The enzyme catalyses D-erythro-1-(imidazol-4-yl)glycerol 3-phosphate = 3-(imidazol-4-yl)-2-oxopropyl phosphate + H2O. The protein operates within amino-acid biosynthesis; L-histidine biosynthesis; L-histidine from 5-phospho-alpha-D-ribose 1-diphosphate: step 6/9. In Caldicellulosiruptor bescii (strain ATCC BAA-1888 / DSM 6725 / KCTC 15123 / Z-1320) (Anaerocellum thermophilum), this protein is Imidazoleglycerol-phosphate dehydratase.